We begin with the raw amino-acid sequence, 173 residues long: Small ribosomal subunit protein uS5 (173 aa).

In terms of domain architecture, S5 DRBM spans 16-79; sequence LSELLVSVRR…NAAKKNMIRV (64 aa).

The protein belongs to the universal ribosomal protein uS5 family. In terms of assembly, part of the 30S ribosomal subunit. Contacts proteins S4 and S8.

With S4 and S12 plays an important role in translational accuracy. Functionally, located at the back of the 30S subunit body where it stabilizes the conformation of the head with respect to the body. This is Small ribosomal subunit protein uS5 from Anaplasma phagocytophilum (strain HZ).